Consider the following 425-residue polypeptide: Enolase (425 aa).

Residue Gln162 participates in (2R)-2-phosphoglycerate binding. Glu204 acts as the Proton donor in catalysis. 3 residues coordinate Mg(2+): Asp241, Glu284, and Asp311. The (2R)-2-phosphoglycerate site is built by Lys336, Arg365, Ser366, and Lys387. Catalysis depends on Lys336, which acts as the Proton acceptor.

Belongs to the enolase family. Mg(2+) is required as a cofactor.

The protein localises to the cytoplasm. Its subcellular location is the secreted. The protein resides in the cell surface. The catalysed reaction is (2R)-2-phosphoglycerate = phosphoenolpyruvate + H2O. The protein operates within carbohydrate degradation; glycolysis; pyruvate from D-glyceraldehyde 3-phosphate: step 4/5. In terms of biological role, catalyzes the reversible conversion of 2-phosphoglycerate (2-PG) into phosphoenolpyruvate (PEP). It is essential for the degradation of carbohydrates via glycolysis. The protein is Enolase of Brucella abortus (strain S19).